The sequence spans 273 residues: Large ribosomal subunit protein uL29m (273 aa).

Over residues 247–258 (PLRHDRWEKGQE) the composition is skewed to basic and acidic residues. A disordered region spans residues 247 to 273 (PLRHDRWEKGQEENSGGETEDGNAPSN).

Belongs to the universal ribosomal protein uL29 family. As to quaternary structure, component of the mitochondrial large ribosomal subunit. Mature mitochondrial ribosomes consist of a small (37S) and a large (54S) subunit. The 37S subunit contains at least 33 different proteins and 1 molecule of RNA (15S). The 54S subunit contains at least 45 different proteins and 1 molecule of RNA (21S).

The protein localises to the mitochondrion. In Aspergillus niger (strain ATCC MYA-4892 / CBS 513.88 / FGSC A1513), this protein is Large ribosomal subunit protein uL29m (mrpl4).